The primary structure comprises 266 residues: Phosphatidylserine decarboxylase proenzyme (266 aa).

Catalysis depends on charge relay system; for autoendoproteolytic cleavage activity residues D74, H135, and S237. The Schiff-base intermediate with substrate; via pyruvic acid; for decarboxylase activity role is filled by S237. The residue at position 237 (S237) is a Pyruvic acid (Ser); by autocatalysis.

Belongs to the phosphatidylserine decarboxylase family. PSD-B subfamily. Prokaryotic type I sub-subfamily. Heterodimer of a large membrane-associated beta subunit and a small pyruvoyl-containing alpha subunit. Pyruvate serves as cofactor. In terms of processing, is synthesized initially as an inactive proenzyme. Formation of the active enzyme involves a self-maturation process in which the active site pyruvoyl group is generated from an internal serine residue via an autocatalytic post-translational modification. Two non-identical subunits are generated from the proenzyme in this reaction, and the pyruvate is formed at the N-terminus of the alpha chain, which is derived from the carboxyl end of the proenzyme. The autoendoproteolytic cleavage occurs by a canonical serine protease mechanism, in which the side chain hydroxyl group of the serine supplies its oxygen atom to form the C-terminus of the beta chain, while the remainder of the serine residue undergoes an oxidative deamination to produce ammonia and the pyruvoyl prosthetic group on the alpha chain. During this reaction, the Ser that is part of the protease active site of the proenzyme becomes the pyruvoyl prosthetic group, which constitutes an essential element of the active site of the mature decarboxylase.

The protein resides in the cell membrane. It carries out the reaction a 1,2-diacyl-sn-glycero-3-phospho-L-serine + H(+) = a 1,2-diacyl-sn-glycero-3-phosphoethanolamine + CO2. Its pathway is phospholipid metabolism; phosphatidylethanolamine biosynthesis; phosphatidylethanolamine from CDP-diacylglycerol: step 2/2. Functionally, catalyzes the formation of phosphatidylethanolamine (PtdEtn) from phosphatidylserine (PtdSer). The protein is Phosphatidylserine decarboxylase proenzyme of Campylobacter jejuni subsp. jejuni serotype O:2 (strain ATCC 700819 / NCTC 11168).